A 146-amino-acid chain; its full sequence is Protein SprT-like (146 aa).

In terms of domain architecture, SprT-like spans asparagine 4–leucine 142. Zn(2+) is bound at residue histidine 64. Glutamate 65 is a catalytic residue. Histidine 68 contacts Zn(2+).

This sequence belongs to the SprT family. Zn(2+) is required as a cofactor.

It is found in the cytoplasm. The chain is Protein SprT-like from Streptococcus gordonii (strain Challis / ATCC 35105 / BCRC 15272 / CH1 / DL1 / V288).